Reading from the N-terminus, the 695-residue chain is Solute carrier family 53 member 1 (695 aa).

Topologically, residues 1–228 (MKFAEHLSAH…RVPPLGAAQP (228 aa)) are cytoplasmic. The SPX domain maps to 2 to 224 (KFAEHLSAHI…MKRLRVPPLG (223 aa)). An important for inositol polyphosphate binding region spans residues 158 to 165 (KILKKHDK). A helical transmembrane segment spans residues 229–259 (APAWTTFRVGLFCGIFIVLNITLVFAAVFKL). At 260 to 264 (ETDRT) the chain is on the extracellular side. Residues 265–296 (VWPLIRIYRGGFLLIEFLFLLGINTYGWRQAG) form a helical membrane-spanning segment. Residues 297 to 309 (VNHVLIFELNPRN) are Cytoplasmic-facing. Residues 310-337 (NLSHQHLFEIAGFLGILWCLSLLACFFA) traverse the membrane as a helical segment. At 338 to 343 (PISIIP) the chain is on the extracellular side. Residues 344 to 365 (IYVYPLALYGFMVFFLINPTKT) traverse the membrane as a helical segment. An intramembrane region (helical) is located at residues 366–383 (FYYKSRFWLLKLLFRVFT). At 384–388 (APFHK) the chain is on the cytoplasmic side. The chain crosses the membrane as a discontinuously helical span at residues 389–422 (VGFADFWLADQLNSLSVILMDLEYMICFYSFELK). The phosphate site is built by aspartate 398 and asparagine 401. At 423-429 (WDESKGL) the chain is on the extracellular side. Residues 430 to 471 (LPNDPQEPEFCHKYSYGVRAIVQCIPAWLRFIQCLRRYRDTR) traverse the membrane as a discontinuously helical segment. The EXS domain occupies 439–642 (FCHKYSYGVR…LNADDQTLLE (204 aa)). Residue arginine 472 is a topological domain, cytoplasmic. The helical transmembrane segment at 473–503 (AFPHLVNAGKYSTTFFTVTFAALYSTHEEQN) threads the bilayer. Residues lysine 482 and tyrosine 483 each contribute to the phosphate site. At 504 to 506 (HSD) the chain is on the extracellular side. Residues 507–534 (TVVFFYLWVFFCIISSCYTLIWDLKMDW) form a helical membrane-spanning segment. At 535–553 (GLFDKNAGENTFLREEIVY) the chain is on the cytoplasmic side. A discontinuously helical transmembrane segment spans residues 554 to 584 (PQKAYYYCAIIEDVILRFAWTIQISITATFK). Residue arginine 570 participates in phosphate binding. The Extracellular portion of the chain corresponds to 585 to 586 (PH). A helical transmembrane segment spans residues 587-625 (VGNIIATVFAPLEVFRRFVWNFFRLENEHLNNCGEFRAV). The phosphate site is built by arginine 602 and arginine 603. Residues 626–695 (RDISVAPLNA…IEDTDDEANT (70 aa)) are Cytoplasmic-facing. Phosphoserine is present on serine 667. The segment at 671–695 (PRLASQSKARDTKVLIEDTDDEANT) is disordered. A Phosphothreonine modification is found at threonine 689.

Belongs to the SYG1 (TC 2.A.94) family. As to quaternary structure, homodimer. As to expression, expressed in pancreatic islets.

Its subcellular location is the cell membrane. It carries out the reaction phosphate(in) = phosphate(out). Functionally, inorganic ion transporter that mediates phosphate ion export across plasma membrane. Plays a major role in phosphate homeostasis, preventing intracellular phosphate accumulation and possible calcium phosphate precipitation, ultimately preserving calcium signaling. Binds inositol hexakisphosphate (Ins6P) and similar inositol polyphosphates, such as 5-diphospho-inositol pentakisphosphate (5-InsP7), which are important intracellular signaling molecules involved in regulation of phosphate flux. (Microbial infection) Receptor for xenotropic and polytropic murine leukemia (X- and P-MLV) retroviruses. Confers susceptibility to X- or P-MLV infection in vitro. The chain is Solute carrier family 53 member 1 from Mus musculus (Mouse).